We begin with the raw amino-acid sequence, 614 residues long: Dihydroxy-acid dehydratase (614 aa).

Asp-81 provides a ligand contact to Mg(2+). Residue Cys-122 participates in [2Fe-2S] cluster binding. Mg(2+) contacts are provided by Asp-123 and Lys-124. Residue Lys-124 is modified to N6-carboxylysine. Residue Cys-195 coordinates [2Fe-2S] cluster. Residue Glu-491 participates in Mg(2+) binding. Ser-517 (proton acceptor) is an active-site residue.

This sequence belongs to the IlvD/Edd family. Homodimer. [2Fe-2S] cluster is required as a cofactor. It depends on Mg(2+) as a cofactor.

It catalyses the reaction (2R)-2,3-dihydroxy-3-methylbutanoate = 3-methyl-2-oxobutanoate + H2O. The enzyme catalyses (2R,3R)-2,3-dihydroxy-3-methylpentanoate = (S)-3-methyl-2-oxopentanoate + H2O. The protein operates within amino-acid biosynthesis; L-isoleucine biosynthesis; L-isoleucine from 2-oxobutanoate: step 3/4. It participates in amino-acid biosynthesis; L-valine biosynthesis; L-valine from pyruvate: step 3/4. Functions in the biosynthesis of branched-chain amino acids. Catalyzes the dehydration of (2R,3R)-2,3-dihydroxy-3-methylpentanoate (2,3-dihydroxy-3-methylvalerate) into 2-oxo-3-methylpentanoate (2-oxo-3-methylvalerate) and of (2R)-2,3-dihydroxy-3-methylbutanoate (2,3-dihydroxyisovalerate) into 2-oxo-3-methylbutanoate (2-oxoisovalerate), the penultimate precursor to L-isoleucine and L-valine, respectively. This chain is Dihydroxy-acid dehydratase, found in Rhodopseudomonas palustris (strain BisA53).